A 169-amino-acid chain; its full sequence is PSDKRLDADISPKPTIFLPSVAETNLHKTGTYLCILEKFFPDVIRVYWKDKNGNTILDSQEGDTLKTKGTYMKFSWLTVPERSMGKEHRCIVKHENNKGGADQEIFFPSIKKVATTCWQDKNDVLQLQFMSTSAYYTYLLLLLKSVIYLAIISFSLLRRTSVCCNEKRS.

Residues 1–136 (PSDKRLDADI…LQFMSTSAYY (136 aa)) form a c region region. The helical transmembrane segment at 137-157 (TYLLLLLKSVIYLAIISFSLL) threads the bilayer. At 158–169 (RRTSVCCNEKRS) the chain is on the cytoplasmic side.

The protein resides in the membrane. The protein is T-cell receptor gamma chain C region DFL12 of Mus musculus (Mouse).